Reading from the N-terminus, the 321-residue chain is MNRPERLQPGVKLRDADKVSRIPVKIVPSERDTMLRKPDWLRVKLPASNQRILEIKQALRKNGLHSVCEEASCPNLAECFNHGTATFMILGAICTRRCPFCDVAHGRPLKPDAEEPVKLAQTIRDMKLKYVVITSVDRDDLRDGGAQHFADCIREIRKLNPDIKIETLVPDFRGRIDAALDILSTEPPDVFNHNLETAPMHYRKARPGANYQWSLDLLKRFKERHPNVPTKSGLMMGLGETNEEIAQVLRDLRAHNVEMLTLGQYLQPSKFHLPVERYVPPAEFDELKALADELGFTHAACGPLVRSSYHADLQAQGKEVK.

The [4Fe-4S] cluster site is built by Cys-68, Cys-73, Cys-79, Cys-94, Cys-98, Cys-101, and Ser-308. The region spanning 80 to 297 is the Radical SAM core domain; it reads FNHGTATFMI…KALADELGFT (218 aa).

It belongs to the radical SAM superfamily. Lipoyl synthase family. It depends on [4Fe-4S] cluster as a cofactor.

It localises to the cytoplasm. It catalyses the reaction [[Fe-S] cluster scaffold protein carrying a second [4Fe-4S](2+) cluster] + N(6)-octanoyl-L-lysyl-[protein] + 2 oxidized [2Fe-2S]-[ferredoxin] + 2 S-adenosyl-L-methionine + 4 H(+) = [[Fe-S] cluster scaffold protein] + N(6)-[(R)-dihydrolipoyl]-L-lysyl-[protein] + 4 Fe(3+) + 2 hydrogen sulfide + 2 5'-deoxyadenosine + 2 L-methionine + 2 reduced [2Fe-2S]-[ferredoxin]. It functions in the pathway protein modification; protein lipoylation via endogenous pathway; protein N(6)-(lipoyl)lysine from octanoyl-[acyl-carrier-protein]: step 2/2. In terms of biological role, catalyzes the radical-mediated insertion of two sulfur atoms into the C-6 and C-8 positions of the octanoyl moiety bound to the lipoyl domains of lipoate-dependent enzymes, thereby converting the octanoylated domains into lipoylated derivatives. The chain is Lipoyl synthase from Shewanella baltica (strain OS223).